The following is a 149-amino-acid chain: Putative pre-16S rRNA nuclease (149 aa).

The protein belongs to the YqgF nuclease family.

The protein resides in the cytoplasm. In terms of biological role, could be a nuclease involved in processing of the 5'-end of pre-16S rRNA. In Synechococcus sp. (strain ATCC 27144 / PCC 6301 / SAUG 1402/1) (Anacystis nidulans), this protein is Putative pre-16S rRNA nuclease.